Consider the following 671-residue polypeptide: Nucleolar GTP-binding protein 1 (671 aa).

The 182-residue stretch at 169–350 (RTVLICGYPN…VKNAACERLL (182 aa)) folds into the OBG-type G domain. Residues 175–182 (GYPNVGKS), 221–225 (DTPGI), and 289–292 (NKTD) contribute to the GTP site. The tract at residues 516–671 (VAQNRSTVPR…KRGKGKTDRR (156 aa)) is disordered. The span at 595–605 (RAMSISRSQSR) shows a compositional bias: polar residues. 2 stretches are compositionally biased toward basic residues: residues 631-640 (NKSHKKRDKN) and 654-671 (RPKH…TDRR).

This sequence belongs to the TRAFAC class OBG-HflX-like GTPase superfamily. OBG GTPase family. NOG subfamily.

It localises to the nucleus. The protein localises to the nucleolus. Functionally, involved in the biogenesis of the 60S ribosomal subunit. The polypeptide is Nucleolar GTP-binding protein 1 (Arabidopsis thaliana (Mouse-ear cress)).